The following is a 277-amino-acid chain: Large ribosomal subunit protein uL2 (277 aa).

Residues 212–277 form a disordered region; sequence RWRGKRPHVR…KFIVRGRKSK (66 aa). Positions 254-277 are enriched in basic residues; sequence TAGKKTRDKKKASTKFIVRGRKSK.

It belongs to the universal ribosomal protein uL2 family. Part of the 50S ribosomal subunit. Forms a bridge to the 30S subunit in the 70S ribosome.

One of the primary rRNA binding proteins. Required for association of the 30S and 50S subunits to form the 70S ribosome, for tRNA binding and peptide bond formation. It has been suggested to have peptidyltransferase activity; this is somewhat controversial. Makes several contacts with the 16S rRNA in the 70S ribosome. The sequence is that of Large ribosomal subunit protein uL2 from Leuconostoc citreum (strain KM20).